The chain runs to 410 residues: LL-diaminopimelate aminotransferase (410 aa).

2 residues coordinate substrate: Y15 and G42. Pyridoxal 5'-phosphate contacts are provided by residues Y72, 108-109, Y132, N188, Y219, and 247-249; these read AK and SFS. Residues K109, Y132, and N188 each contribute to the substrate site. K250 bears the N6-(pyridoxal phosphate)lysine mark. Pyridoxal 5'-phosphate contacts are provided by R258 and N293. Positions 293 and 389 each coordinate substrate.

Belongs to the class-I pyridoxal-phosphate-dependent aminotransferase family. LL-diaminopimelate aminotransferase subfamily. Homodimer. Requires pyridoxal 5'-phosphate as cofactor.

It carries out the reaction (2S,6S)-2,6-diaminopimelate + 2-oxoglutarate = (S)-2,3,4,5-tetrahydrodipicolinate + L-glutamate + H2O + H(+). It participates in amino-acid biosynthesis; L-lysine biosynthesis via DAP pathway; LL-2,6-diaminopimelate from (S)-tetrahydrodipicolinate (aminotransferase route): step 1/1. In terms of biological role, involved in the synthesis of meso-diaminopimelate (m-DAP or DL-DAP), required for both lysine and peptidoglycan biosynthesis. Catalyzes the direct conversion of tetrahydrodipicolinate to LL-diaminopimelate. This Bacteroides thetaiotaomicron (strain ATCC 29148 / DSM 2079 / JCM 5827 / CCUG 10774 / NCTC 10582 / VPI-5482 / E50) protein is LL-diaminopimelate aminotransferase.